A 608-amino-acid chain; its full sequence is Microtubule-associated protein VP7 (608 aa).

The protein localises to the virion. Its subcellular location is the host cytoplasm. It localises to the host cytoskeleton. Minor inner capsid component. Displays NTPase and RNA 5'-triphosphatase (RTPase) activities. May function as a cofactor of polymerase. Associates with microtubules and plays a role in the formation, structural organization and morphology of viral inclusions, where the assembly of cores and the replication of viral RNA occur. The chain is Microtubule-associated protein VP7 from Oryza latifolia (Indian wild rice).